Consider the following 219-residue polypeptide: Agamous-like MADS-box protein AGL19 (219 aa).

Residues 1 to 61 (MVRGKTEMKR…SKLYEFSSSS (61 aa)) form the MADS-box domain. Positions 77–96 (GNNHKRNDNSQQARDETSGL) are disordered. Residues 86 to 176 (SQQARDETSG…KEKWLGMGTA (91 aa)) enclose the K-box domain.

Interacts with SOC1 and AGL21. In terms of tissue distribution, mostly expressed in the outer layers of the root meristem (lateral root cap and epidermis) and in the central cylinder cells of mature roots. Also present in rosette leaves and seedlings and, to a lesser extent, in cauline leaves and flowers. Enriched in apices including the shoot apical meristem and developing leaf primordia.

It is found in the nucleus. Functionally, probable transcription factor that promotes flowering, especially in response to vernalization by short periods of cold, in an FLC-inpedendent manner. The sequence is that of Agamous-like MADS-box protein AGL19 (AGL19) from Arabidopsis thaliana (Mouse-ear cress).